The chain runs to 309 residues: MAPSHWRLILNGKSTDNADLREAVGTLRKRGIQLDVRVTWEDGDAERYVSEAVADGVHTVVAAGGDGTLSEVAAALAHHERDAATLPSLGLVPLGTANDFATAANVPITPLDALTLIAERVAQPVDLLRIDAEHGPRWCANVASGGFGTQVTVETDEGLKKMLGGLAYLITGMSRLGRIDPIGARFNGPDFSWEGEFIALGLGNGRQAGGGQALCPEAVIDDGLLDVTIVPALDGEVAATLGTLVTGGKQAALERVAVRARVPWLEIVSNQPLTLNLDGEPETSRHFRIACVPARLRMHLPNDCPLLGR.

Residues 1–134 enclose the DAGKc domain; sequence MAPSHWRLIL…VDLLRIDAEH (134 aa). ATP-binding positions include Thr39, 65–71, and Thr96; that span reads GDGTLSE. Residues Val219, Asp222, and Leu224 each coordinate Mg(2+). Glu280 serves as the catalytic Proton acceptor.

It belongs to the diacylglycerol/lipid kinase family. YegS lipid kinase subfamily. Mg(2+) serves as cofactor. It depends on Ca(2+) as a cofactor.

It is found in the cytoplasm. In terms of biological role, probably phosphorylates lipids; the in vivo substrate is unknown. The sequence is that of Probable lipid kinase YegS-like from Xanthomonas oryzae pv. oryzae (strain MAFF 311018).